A 211-amino-acid polypeptide reads, in one-letter code: Dephospho-CoA kinase (211 aa).

The DPCK domain occupies 2–204; it reads IIGLTGSIGM…SGVRRWRRGK (203 aa). An ATP-binding site is contributed by 10 to 15; the sequence is GMGKST.

The protein belongs to the CoaE family.

It localises to the cytoplasm. It carries out the reaction 3'-dephospho-CoA + ATP = ADP + CoA + H(+). It participates in cofactor biosynthesis; coenzyme A biosynthesis; CoA from (R)-pantothenate: step 5/5. Functionally, catalyzes the phosphorylation of the 3'-hydroxyl group of dephosphocoenzyme A to form coenzyme A. This is Dephospho-CoA kinase from Rhodospirillum rubrum (strain ATCC 11170 / ATH 1.1.1 / DSM 467 / LMG 4362 / NCIMB 8255 / S1).